Reading from the N-terminus, the 510-residue chain is 2,3-bisphosphoglycerate-independent phosphoglycerate mutase (510 aa).

Positions 13 and 63 each coordinate Mn(2+). The active-site Phosphoserine intermediate is Ser63. Substrate contacts are provided by residues His124, 154 to 155 (RD), Arg186, Arg192, 262 to 265 (RADR), and Lys334. Mn(2+) contacts are provided by Asp401, His405, Asp442, His443, and His461.

Belongs to the BPG-independent phosphoglycerate mutase family. As to quaternary structure, monomer. It depends on Mn(2+) as a cofactor.

It catalyses the reaction (2R)-2-phosphoglycerate = (2R)-3-phosphoglycerate. The protein operates within carbohydrate degradation; glycolysis; pyruvate from D-glyceraldehyde 3-phosphate: step 3/5. In terms of biological role, catalyzes the interconversion of 2-phosphoglycerate and 3-phosphoglycerate. The protein is 2,3-bisphosphoglycerate-independent phosphoglycerate mutase of Aliivibrio fischeri (strain ATCC 700601 / ES114) (Vibrio fischeri).